Here is a 293-residue protein sequence, read N- to C-terminus: uncharacterized protein (293 aa).

Residues 1–60 enclose the HTH lysR-type domain; sequence MHITLRQLEVFAEVLKSGSTTQASVMLALSQSAVSAALTDLEGQLGVQLFDRVGKRLVVN. A DNA-binding region (H-T-H motif) is located at residues 20-39; sequence TTQASVMLALSQSAVSAALT.

Belongs to the LysR transcriptional regulatory family.

This is an uncharacterized protein from Escherichia coli O157:H7.